Here is a 1062-residue protein sequence, read N- to C-terminus: Exportin-T (1062 aa).

This sequence belongs to the exportin family.

It localises to the nucleus. It is found in the cytoplasm. Its function is as follows. tRNA nucleus export receptor which facilitates tRNA translocation across the nuclear pore complex. Involved in pre-tRNA splicing, probably by affecting the interaction of pre-tRNA with splicing endonuclease. The sequence is that of Exportin-T (LOS1) from Vanderwaltozyma polyspora (strain ATCC 22028 / DSM 70294 / BCRC 21397 / CBS 2163 / NBRC 10782 / NRRL Y-8283 / UCD 57-17) (Kluyveromyces polysporus).